The following is a 1053-amino-acid chain: Middle cell wall protein (1053 aa).

A signal peptide spans 1–23 (MKKVVNSVLASALALTVAPMAFA). SLH domains lie at 26-89 (EAAT…KLAQ), 90-153 (FSNT…KGVW), and 154-203 (PNSM…FGTD).

In terms of assembly, the middle cell wall layer is composed of subunits of the middle cell wall protein. These proteins form a hexagonal array with a lattice constant of 14.5 nM in the middle cell wall layers.

The protein localises to the secreted. It is found in the cell wall. It localises to the S-layer. The middle wall protein binds to peptidoglycan and to the outer cell wall protein. This chain is Middle cell wall protein, found in Brevibacillus brevis (strain 47 / JCM 6285 / NBRC 100599).